A 370-amino-acid chain; its full sequence is Uroporphyrinogen decarboxylase (370 aa).

Residues 29–33 (RQAGR), Asp-79, Tyr-155, Ser-210, and His-342 each bind substrate.

It belongs to the uroporphyrinogen decarboxylase family. As to quaternary structure, homodimer.

The protein resides in the cytoplasm. The catalysed reaction is uroporphyrinogen III + 4 H(+) = coproporphyrinogen III + 4 CO2. Its pathway is porphyrin-containing compound metabolism; protoporphyrin-IX biosynthesis; coproporphyrinogen-III from 5-aminolevulinate: step 4/4. Functionally, catalyzes the decarboxylation of four acetate groups of uroporphyrinogen-III to yield coproporphyrinogen-III. This chain is Uroporphyrinogen decarboxylase, found in Acidovorax ebreus (strain TPSY) (Diaphorobacter sp. (strain TPSY)).